A 77-amino-acid polypeptide reads, in one-letter code: Small ribosomal subunit protein bS16c (77 aa).

It belongs to the bacterial ribosomal protein bS16 family.

The protein localises to the plastid. It localises to the chloroplast. The chain is Small ribosomal subunit protein bS16c from Eucalyptus globulus subsp. globulus (Tasmanian blue gum).